The primary structure comprises 591 residues: Aspartate--tRNA ligase (591 aa).

Glutamate 173 lines the L-aspartate pocket. The tract at residues 197 to 200 (QLFK) is aspartate. Residue arginine 219 coordinates L-aspartate. ATP-binding positions include 219–221 (RDE) and glutamine 228. Histidine 446 contacts L-aspartate. Glutamate 482 contributes to the ATP binding site. Arginine 489 serves as a coordination point for L-aspartate. 534–537 (GLDR) is an ATP binding site.

Belongs to the class-II aminoacyl-tRNA synthetase family. Type 1 subfamily. Homodimer.

The protein resides in the cytoplasm. The catalysed reaction is tRNA(Asp) + L-aspartate + ATP = L-aspartyl-tRNA(Asp) + AMP + diphosphate. Catalyzes the attachment of L-aspartate to tRNA(Asp) in a two-step reaction: L-aspartate is first activated by ATP to form Asp-AMP and then transferred to the acceptor end of tRNA(Asp). In Limosilactobacillus fermentum (strain NBRC 3956 / LMG 18251) (Lactobacillus fermentum), this protein is Aspartate--tRNA ligase.